A 462-amino-acid chain; its full sequence is DEK domain-containing chromatin-associated protein 1 (462 aa).

Disordered regions lie at residues 18 to 91 (AVTE…TQGR) and 212 to 390 (KETK…RKEL). The span at 20-32 (TEKDTETKKKDEV) shows a compositional bias: basic and acidic residues. Acidic residues predominate over residues 33-46 (EKDEAMEEKGEEID). Residues 77 to 91 (PRSSGNKPLSITQGR) are compositionally biased toward polar residues. The segment covering 267–276 (NGEDDVAPEE) has biased composition (acidic residues). Basic and acidic residues-rich tracts occupy residues 277–303 (ENNK…TDKK), 312–322 (EKPAAEEEKSI), and 347–360 (QKVD…EKGK). The Nuclear localization signal signature appears at 344–351 (SKKQKVDK). The DEK-C domain maps to 384-439 (EPTRKELHVVVTKILKEVDFNTATLSDILRKLGSHFGIDLMHRKAEVKDIITDAIN). 2 DNA-binding regions span residues 402–416 (DFNT…RKLG) and 431–435 (KDIIT). The tract at residues 438-462 (INEMSDDDDEKEEDTEDEGEKEGKD) is disordered. A compositionally biased stretch (acidic residues) spans 441-462 (MSDDDDEKEEDTEDEGEKEGKD).

As to quaternary structure, found in a mRNA splicing-dependent exon junction complex (EJC). Binds specifically histones H3 and H4.

It is found in the nucleus. Its subcellular location is the nucleolus. In terms of biological role, chromatin-associated protein which contributes to the modulation of chromatin structure (such as super-helical structure of DNA) and function. Binds to chromatin of protein-coding genes throughout the genome to regulate nucleosome occupancy and chromatin accessibility, and to modulate the expression of target genes. The chain is DEK domain-containing chromatin-associated protein 1 from Arabidopsis thaliana (Mouse-ear cress).